The chain runs to 173 residues: dCTP deaminase, dUMP-forming (173 aa).

DCTP is bound by residues Arg-93–Arg-98, Asp-111, Thr-119–Glu-121, and Gln-138. The active-site Proton donor/acceptor is the Glu-121.

This sequence belongs to the dCTP deaminase family. As to quaternary structure, homotrimer.

It carries out the reaction dCTP + 2 H2O = dUMP + NH4(+) + diphosphate. It functions in the pathway pyrimidine metabolism; dUMP biosynthesis; dUMP from dCTP: step 1/1. Its function is as follows. Bifunctional enzyme that catalyzes both the deamination of dCTP to dUTP and the hydrolysis of dUTP to dUMP without releasing the toxic dUTP intermediate. This chain is dCTP deaminase, dUMP-forming, found in Leptospira interrogans serogroup Icterohaemorrhagiae serovar copenhageni (strain Fiocruz L1-130).